A 456-amino-acid polypeptide reads, in one-letter code: 3-isopropylmalate dehydratase large subunit (456 aa).

3 residues coordinate [4Fe-4S] cluster: cysteine 336, cysteine 396, and cysteine 399.

Belongs to the aconitase/IPM isomerase family. LeuC type 1 subfamily. In terms of assembly, heterodimer of LeuC and LeuD. Requires [4Fe-4S] cluster as cofactor.

It catalyses the reaction (2R,3S)-3-isopropylmalate = (2S)-2-isopropylmalate. The protein operates within amino-acid biosynthesis; L-leucine biosynthesis; L-leucine from 3-methyl-2-oxobutanoate: step 2/4. Catalyzes the isomerization between 2-isopropylmalate and 3-isopropylmalate, via the formation of 2-isopropylmaleate. This Staphylococcus aureus (strain JH1) protein is 3-isopropylmalate dehydratase large subunit.